Here is a 432-residue protein sequence, read N- to C-terminus: Serine hydroxymethyltransferase 1 (432 aa).

(6S)-5,6,7,8-tetrahydrofolate is bound by residues Leu131 and Gly135–Leu137. Position 240 is an N6-(pyridoxal phosphate)lysine (Lys240).

The protein belongs to the SHMT family. In terms of assembly, homodimer. Requires pyridoxal 5'-phosphate as cofactor.

The protein localises to the cytoplasm. It catalyses the reaction (6R)-5,10-methylene-5,6,7,8-tetrahydrofolate + glycine + H2O = (6S)-5,6,7,8-tetrahydrofolate + L-serine. It participates in one-carbon metabolism; tetrahydrofolate interconversion. The protein operates within amino-acid biosynthesis; glycine biosynthesis; glycine from L-serine: step 1/1. Functionally, catalyzes the reversible interconversion of serine and glycine with tetrahydrofolate (THF) serving as the one-carbon carrier. This reaction serves as the major source of one-carbon groups required for the biosynthesis of purines, thymidylate, methionine, and other important biomolecules. Also exhibits THF-independent aldolase activity toward beta-hydroxyamino acids, producing glycine and aldehydes, via a retro-aldol mechanism. The sequence is that of Serine hydroxymethyltransferase 1 from Rhodopseudomonas palustris (strain ATCC BAA-98 / CGA009).